The sequence spans 209 residues: Redox-sensing transcriptional repressor Rex (209 aa).

The segment at residues 16–55 (LYYRFIQNLSLSGKQRVSSAELSEAVKVDSATIRRDFSYF) is a DNA-binding region (H-T-H motif). NAD(+) is bound at residue 90-95 (GVGNLG).

It belongs to the transcriptional regulatory Rex family. In terms of assembly, homodimer.

The protein localises to the cytoplasm. Its function is as follows. Modulates transcription in response to changes in cellular NADH/NAD(+) redox state. This Bacillus cereus (strain G9842) protein is Redox-sensing transcriptional repressor Rex.